Reading from the N-terminus, the 608-residue chain is MSDKNSRIAIVSADKCKPKKCRQECKRSCPVVKTGKLCIEVTPTSKIAFISEILCIGCGICVKKCPFDAIQIINLPTNLEAHVTHRYSANSFKLHRLPTPRPGQVLGLVGTNGIGKSTALKILAGKQKPNLGRFDDPPEWQEIIKYFRGSELQNYFTKMLEDDIKAIIKPQYVDNIPRAIKGPVQKVGELLKLRMEKSPEDVKRYIKILQLENVLKRDIEKLSGGELQRFAIGMSCVQEADVYMFDEPSSYLDVKQRLNAAQIIRSLLAPTKYVICVEHDLSVLDYLSDFVCIIYGVPSVYGVVTLPASVREGINIFLDGHIPAENLRFRTEALQFRIADATEDLQNDSASRAFSYPSLKKTQGDFVLNVEEGEFSDSEILVMMGENGTGKTTLIKLLAGALKPDEGQDIPKLNVSMKPQKIAPKFPGTVRQLFFKKIRGQFLNPQFQTDVVKPLRIDDIIDQEVQHLSGGELQRVAIVLALGIPADIYLIDEPSAYLDSEQRIICSKVIRRFILHNKKTAFIVEHDFIMATYLADKVIVFEGIPSKNAHARAPESLLTGCNRFLKNLNVTFRRDPNSFRPRINKLDSQMDKEQKSSGNYFFLDNTGI.

4Fe-4S ferredoxin-type domains lie at 7 to 39 (RIAI…KLCI) and 46 to 75 (KIAF…IINL). 2 consecutive ABC transporter domains span residues 70–320 (IQII…FLDG) and 345–568 (LQND…LKNL). 110-117 (GTNGIGKS) contacts ATP. S349 carries the post-translational modification Phosphoserine. Residue 385–392 (GENGTGKT) coordinates ATP.

Belongs to the ABC transporter superfamily. ABCE family. In terms of assembly, component of the multifactor complex (MFC) composed of at least RLI1, the eIF2 subunit SUI2, TIF5/eIF5, and the eIF3 subunits PRT1, HCR1, NIP1, RPG1, TIF34 and TIF35. The complex associates with pre-initiation complexes. Interacts with the complex YAE1:LTO1; the complex bridges the interaction between the CIA complex and RLI1.

The protein localises to the cytoplasm. It is found in the nucleus. In terms of biological role, component of the multifactor complex (MFC) involved in translation initiation. Required for the binding of MFC to the 40S ribosome. Required for the processing and nuclear export of the 60S and 40S ribosomal subunits. In Saccharomyces cerevisiae (strain ATCC 204508 / S288c) (Baker's yeast), this protein is Translation initiation factor RLI1 (RLI1).